The following is a 2325-amino-acid chain: Centriolin (2325 aa).

Residues 1–33 are disordered; sequence MKKGSQQKIFSKAKIPSSSHSPIPSSMSNMRSR. A compositionally biased stretch (low complexity) spans 16 to 33; it reads PSSSHSPIPSSMSNMRSR. 4 LRR repeats span residues 126–147, 148–169, 170–191, and 194–215; these read KLEV…DKLL, KLRE…ENMC, NLQK…LGKK, and SLRV…SKLK. The LRRCT domain maps to 228–266; the sequence is NPVVTLPHYLQFTIFHLRSLESLEGQPVTTQDRQEAFER. 2 coiled-coil regions span residues 267 to 343 and 435 to 799; these read FSLE…IELT and LDTQ…LNHV. Position 831 is a phosphoserine (Ser831). Residues 851–1101 are a coiled coil; that stretch reads LARSKWERDE…ARLQNVLDLT (251 aa). Positions 1150–1241 are disordered; it reads PSSKVSSHSS…DQEEPPFVPP (92 aa). Over residues 1224–1235 the composition is skewed to acidic residues; it reads SQEESELDDQEE. A coiled-coil region spans residues 1317 to 2255; the sequence is EHHNLENEVS…DRLKAQLRHC (939 aa). Phosphoserine is present on Ser1475. The segment at 1948–2118 is required for centrosome localization; sequence MMFQRLQKER…ELVAQDNHER (171 aa). The segment at 1985 to 2325 is sufficient for interaction with HOOK2; it reads QKSKLDQVLS…QNQEKNASAR (341 aa). The tract at residues 2288-2325 is disordered; it reads VTSTSADSASSPSLSQLESSLTEDSQLGQNQEKNASAR. Residues 2290–2314 show a composition bias toward low complexity; the sequence is STSADSASSPSLSQLESSLTEDSQL. Residues 2315-2325 show a composition bias toward polar residues; that stretch reads GQNQEKNASAR.

In terms of assembly, interacts with HOOK2. Interacts with EXOC6 and SNAPIN. Associates with the exocyst complex. In terms of tissue distribution, widely expressed with highest levels in testis and trachea.

It localises to the cytoplasm. The protein resides in the cytoskeleton. It is found in the microtubule organizing center. The protein localises to the centrosome. Its subcellular location is the midbody. It localises to the midbody ring. In terms of biological role, involved in cell cycle progression and cytokinesis. During the late steps of cytokinesis, anchors exocyst and SNARE complexes at the midbody, thereby allowing secretory vesicle-mediated abscission. This is Centriolin (CNTRL) from Homo sapiens (Human).